Reading from the N-terminus, the 558-residue chain is MSSTTQWENIYHGLDTTPGKLRMSQGGLGWKPSVGEGSTITIPADQMASFQWIRVARNYQLAIYLNKDRDAPSSAQTNPRRTNFDGFVRDDFDRLSSHIRQYFNKPLEAKEVSTRGWNWGQAKISNHDVQFLVRDKLAFELPLSHLANSNIAKTEVSMEFLNPEQQQPGANTGTSDVNGTKSRRSKGDQLVEMRLYVPGQAIKDDGSDAASAQDDDVNNEETAAEAFHEALKSKADIGQVAGDSIVVFKEVLVLTPRGRYDIDVFSTFIRLRGKTYDYKILYSSMNKLFLLPKADEIHVMLVIGLDPPIRQGQTRYPYLVLQFPREEEMDAELNLDEQTIQEKYDGKLKKRYEEPTFRIVTNIFKVLSGQKVATPTDFESSSGQTSIKCNVKAADGNLYPLEKSLLWVSKQPVYVPYSEIHQAILSRVGGAVASSKTFDLRVATKSGTEHTFQSISREELDRLKAWLADRKVRIKNEMAEETGGLAAAAAAGLLSDDDDEEMGAAGGADEDEDSEEDADFAADSDSDGGSPSEASSDEGEGGGYDDEGDERPKKKRKD.

Disordered stretches follow at residues 162–186 (NPEQQQPGANTGTSDVNGTKSRRSK) and 495–558 (SDDD…KRKD). Over residues 163 to 180 (PEQQQPGANTGTSDVNGT) the composition is skewed to polar residues. Acidic residues-rich tracts occupy residues 495-526 (SDDDDEEMGAAGGADEDEDSEEDADFAADSDS) and 535-549 (SSDEGEGGGYDDEGD).

This sequence belongs to the SSRP1 family. As to quaternary structure, forms a stable heterodimer with SPT16. The SPT16-POB3 dimer weakly associates with multiple molecules of NHP6 to form the FACT complex.

Its subcellular location is the nucleus. The protein resides in the chromosome. Functionally, component of the FACT complex, a general chromatin factor that acts to reorganize nucleosomes. The FACT complex is involved in multiple processes that require DNA as a template such as mRNA elongation, DNA replication and DNA repair. During transcription elongation the FACT complex acts as a histone chaperone that both destabilizes and restores nucleosomal structure. It facilitates the passage of RNA polymerase II and transcription by promoting the dissociation of one histone H2A-H2B dimer from the nucleosome, then subsequently promotes the reestablishment of the nucleosome following the passage of RNA polymerase II. The chain is FACT complex subunit POB3 (POB3) from Mycosarcoma maydis (Corn smut fungus).